The sequence spans 126 residues: Fluoride-specific ion channel FluC (126 aa).

4 helical membrane passes run 4–24, 35–55, 68–88, and 103–123; these read SILA…FLGI, LGTF…VAGF, FVIT…AEVV, and IVIH…TVSL. The Na(+) site is built by G75 and S78.

Belongs to the fluoride channel Fluc/FEX (TC 1.A.43) family.

It is found in the cell inner membrane. It catalyses the reaction fluoride(in) = fluoride(out). Its activity is regulated as follows. Na(+) is not transported, but it plays an essential structural role and its presence is essential for fluoride channel function. Its function is as follows. Fluoride-specific ion channel. Important for reducing fluoride concentration in the cell, thus reducing its toxicity. The sequence is that of Fluoride-specific ion channel FluC from Paraburkholderia xenovorans (strain LB400).